Consider the following 182-residue polypeptide: MTGERPVHLTAIIGSFGGAVENLGAAHGIYAFAVPPEQIVEFCRFLKEHPALEFDFLSDICGVDHYPETPRFETVYHLYSLKNKWRVRIKCRLGEPPHVPTVTGVWRTANWHEREAWDMYGIRFEGHPDLRRIYMWEGFEGFPQRKDFPLRGYKDKLNPFGAEGPPPTQPDLATNDIPQGGR.

The disordered stretch occupies residues 153–182 (YKDKLNPFGAEGPPPTQPDLATNDIPQGGR).

This sequence belongs to the complex I 30 kDa subunit family. In terms of assembly, NDH-1 is composed of 14 different subunits. Subunits NuoB, C, D, E, F, and G constitute the peripheral sector of the complex.

It is found in the cell inner membrane. The catalysed reaction is a quinone + NADH + 5 H(+)(in) = a quinol + NAD(+) + 4 H(+)(out). Functionally, NDH-1 shuttles electrons from NADH, via FMN and iron-sulfur (Fe-S) centers, to quinones in the respiratory chain. The immediate electron acceptor for the enzyme in this species is believed to be ubiquinone. Couples the redox reaction to proton translocation (for every two electrons transferred, four hydrogen ions are translocated across the cytoplasmic membrane), and thus conserves the redox energy in a proton gradient. This is NADH-quinone oxidoreductase subunit C 2 from Rhizobium meliloti (strain 1021) (Ensifer meliloti).